A 127-amino-acid polypeptide reads, in one-letter code: Ribosome-binding factor A (127 aa).

Belongs to the RbfA family. In terms of assembly, monomer. Binds 30S ribosomal subunits, but not 50S ribosomal subunits or 70S ribosomes.

Its subcellular location is the cytoplasm. Functionally, one of several proteins that assist in the late maturation steps of the functional core of the 30S ribosomal subunit. Associates with free 30S ribosomal subunits (but not with 30S subunits that are part of 70S ribosomes or polysomes). Required for efficient processing of 16S rRNA. May interact with the 5'-terminal helix region of 16S rRNA. The sequence is that of Ribosome-binding factor A from Actinobacillus pleuropneumoniae serotype 7 (strain AP76).